The following is a 758-amino-acid chain: Vitamin K-dependent gamma-carboxylase (758 aa).

The interval 1–21 (MAVSARSARTSPGSDKVQKDK) is disordered. A2 bears the N-acetylalanine mark. Over 2 to 60 (AVSARSARTSPGSDKVQKDKAELISGPRQDSLMGKLLGFEWTDLSSWRRLVTLLNRPTD) the chain is Cytoplasmic. Residues 61 to 81 (PASLAVFRFLFGFLMVLDIPQ) form a helical membrane-spanning segment. The Lumenal segment spans residues 82-113 (ERGLSSLDRKYLDGLDVCRFPLLDALRPLPLD). A disulfide bridge links C99 with C450. Residues 114 to 134 (WMYLVYTIMFLGALGMMLGLC) form a helical membrane-spanning segment. Topologically, residues 135-136 (YR) are cytoplasmic. Residues 137–157 (ISCVLFLLPYWYVFLLDKTSW) traverse the membrane as a helical segment. Residues 158-292 (NNHSYLYGLL…VSYFHCMNSQ (135 aa)) lie on the Lumenal side of the membrane. Residues 293-313 (LFSIGMFSYVMLASSPLFCSP) form a helical membrane-spanning segment. The Cytoplasmic segment spans residues 314-361 (EWPRKLVSYCPQRLQELLPLKAAPQPSVSCVYKRSRGKSGQKPGLRHQ). A helical membrane pass occupies residues 362 to 382 (LGAAFTLLYLLEQLFLPYSHF). Over 383 to 758 (LTQGYNNWTN…SNPDPVHSEF (376 aa)) the chain is Lumenal. The segment at 732–758 (GELSPSNMDSSHSNPPESNPDPVHSEF) is disordered. Positions 735 to 747 (SPSNMDSSHSNPP) are enriched in polar residues.

It belongs to the vitamin K-dependent gamma-carboxylase family. As to quaternary structure, monomer. May interact with CALU.

The protein localises to the endoplasmic reticulum membrane. The catalysed reaction is 4-carboxy-L-glutamyl-[protein] + 2,3-epoxyphylloquinone + H2O + H(+) = phylloquinol + L-glutamyl-[protein] + CO2 + O2. In terms of biological role, mediates the vitamin K-dependent carboxylation of glutamate residues to calcium-binding gamma-carboxyglutamate (Gla) residues with the concomitant conversion of the reduced hydroquinone form of vitamin K to vitamin K epoxide. Catalyzes gamma-carboxylation of various proteins, such as blood coagulation factors (F2, F7, F9 and F10), osteocalcin (BGLAP) or matrix Gla protein (MGP). The sequence is that of Vitamin K-dependent gamma-carboxylase (GGCX) from Pongo abelii (Sumatran orangutan).